The sequence spans 251 residues: 5'-nucleotidase SurE (251 aa).

Residues aspartate 8, aspartate 9, serine 39, and asparagine 90 each contribute to the a divalent metal cation site.

This sequence belongs to the SurE nucleotidase family. A divalent metal cation is required as a cofactor.

The protein localises to the cytoplasm. The catalysed reaction is a ribonucleoside 5'-phosphate + H2O = a ribonucleoside + phosphate. Nucleotidase that shows phosphatase activity on nucleoside 5'-monophosphates. In Legionella pneumophila subsp. pneumophila (strain Philadelphia 1 / ATCC 33152 / DSM 7513), this protein is 5'-nucleotidase SurE.